Consider the following 576-residue polypeptide: Vesicular glutamate transporter 1 (576 aa).

Over 1 to 63 (MEFRKEEFKK…CTCFGLPRRY (63 aa)) the chain is Cytoplasmic. The chain crosses the membrane as a helical span at residues 64–84 (IIAIMSGLGFCISFGIRCNLG). The Vesicular portion of the chain corresponds to 85-116 (VAIVSMVNNNTVYKGNKLVIEQAQFNWDPETV). The N-linked (GlcNAc...) asparagine glycan is linked to Asn-93. The helical transmembrane segment at 117-137 (GMIHGSFFWGYIVTQIPGGYI) threads the bilayer. Topologically, residues 138 to 140 (CQK) are cytoplasmic. A helical membrane pass occupies residues 141-161 (FAANRVFGFAIVATSTLNMLI). Over 162-168 (PSAARVH) the chain is Vesicular. Residues 169 to 189 (FACVICVRILQGLVEGVTYPA) form a helical membrane-spanning segment. Residues 190-208 (CHGIWSKWAPPLERSRLAT) lie on the Cytoplasmic side of the membrane. The chain crosses the membrane as a helical span at residues 209–229 (TAFCGSYAGAVVAMPLAGVLV). Topologically, residues 230–236 (QYSGWSS) are vesicular. The chain crosses the membrane as a helical span at residues 237 to 257 (VFYVYGSFGITWYMFWILVSY). Residues 258-297 (ESPAQHPTISEEERKYIEESIGESTGFMNPMAKFKAPWRK) are Cytoplasmic-facing. The helical transmembrane segment at 298-320 (FFTSMPVYAIIVANFCRSWTFYL) threads the bilayer. Residues 321 to 341 (LLISQPAYFEEVFGFAISKVG) are Vesicular-facing. The chain crosses the membrane as a helical span at residues 342 to 362 (LLSALPHLVMTIIVPIGGQIA). At 363-378 (DFLRTKRIMSTTNVRK) the chain is on the cytoplasmic side. A helical membrane pass occupies residues 379–399 (MMNCGGFGMEATLLLVVGYSH). The Vesicular segment spans residues 400-401 (SR). The helical transmembrane segment at 402–422 (GVAISFLVLAVGFSGFAISGF) threads the bilayer. Residues 423–435 (NVNHLDIAPRYAS) are Cytoplasmic-facing. A helical membrane pass occupies residues 436–456 (ILMGISNGVGTLSGMVCPLIV). The Vesicular segment spans residues 457-469 (GAMTKHKTREEWQ). The helical transmembrane segment at 470–490 (YVFLIASLVHYGGVVFYGIFA) threads the bilayer. The Cytoplasmic segment spans residues 491-576 (SGEKQPWAEP…YGTVAERDLS (86 aa)). The interval 517-552 (ADESEEQTQAHGGYGSYGATQTTSQQNGGWATDWEK) is disordered. A compositionally biased stretch (polar residues) spans 534–545 (GATQTTSQQNGG).

This sequence belongs to the major facilitator superfamily. Sodium/anion cotransporter family. VGLUT subfamily.

It localises to the cytoplasmic vesicle. It is found in the secretory vesicle. The protein localises to the synaptic vesicle membrane. The protein resides in the cell membrane. Its subcellular location is the synapse. It localises to the synaptosome. The enzyme catalyses L-glutamate(out) = L-glutamate(in). It catalyses the reaction chloride(in) = chloride(out). The catalysed reaction is 3 Na(+)(out) + phosphate(out) = 3 Na(+)(in) + phosphate(in). It carries out the reaction phosphate(in) = phosphate(out). The enzyme catalyses K(+)(in) + H(+)(out) = K(+)(out) + H(+)(in). With respect to regulation, chloride channel activity is allosterically activated by lumenal H(+) and Cl(-) leading to synaptic vesicles acidification. The L-glutamate transport activity is allosterically activated by lumenal H(+) and Cl(-). The allosteric activation by H(+) efficiently prevents non-vesicular efflux across the plasma membrane, thereby restricting L-glutamate transport activity to acidic membranes such as synaptic vesicles. Functionally, multifunctional transporter that transports L-glutamate as well as multiple ions such as chloride, proton, potassium, sodium and phosphate. At the synaptic vesicle membrane, mainly functions as an uniporter which transports preferentially L-glutamate but also phosphate from the cytoplasm into synaptic vesicles at presynaptic nerve terminals of excitatory neural cells. The L-glutamate or phosphate uniporter activity is electrogenic and is driven by the proton electrochemical gradient, mainly by the electrical gradient established by the vacuolar H(+)-ATPase across the synaptic vesicle membrane. In addition, functions as a chloride channel that allows a chloride permeation through the synaptic vesicle membrane that affects the proton electrochemical gradient and promotes synaptic vesicles acidification. Moreover, may function as a K(+)/H(+) antiport allowing to maintain the electrical gradient and to decrease chemical gradient and therefore sustain vesicular glutamate uptake. The vesicular K(+)/H(+) antiport activity is electroneutral. At the plasma membrane, following exocytosis, functions as a symporter of Na(+) and phosphate from the extracellular space to the cytoplasm allowing synaptic phosphate homeostasis regulation. The symporter activity is driven by an inside negative membrane potential and is electrogenic. Is necessary for synaptic signaling of visual-evoked responses from photoreceptors. The protein is Vesicular glutamate transporter 1 of Xenopus laevis (African clawed frog).